Reading from the N-terminus, the 534-residue chain is Anther-specific proline-rich protein APG (534 aa).

The signal sequence occupies residues 1–35 (MKRSSLVDSCSYSRIFRSIFCLLSFCIFFLTTTNA). The segment covering 59-196 (NPPTPDPSPK…SPKPAPSPPK (138 aa)) has biased composition (pro residues). The segment at 59 to 202 (NPPTPDPSPK…SPPKPENKTI (144 aa)) is disordered. Residue Ser211 is the Nucleophile of the active site. Residues Asp508 and His511 contribute to the active site.

Belongs to the 'GDSL' lipolytic enzyme family. In terms of tissue distribution, found in sporophytic and gametophytic cell types in the anther, only in male fertile plants.

This Arabidopsis thaliana (Mouse-ear cress) protein is Anther-specific proline-rich protein APG (APG).